A 76-amino-acid polypeptide reads, in one-letter code: Exodeoxyribonuclease 7 small subunit (76 aa).

It belongs to the XseB family. As to quaternary structure, heterooligomer composed of large and small subunits.

The protein resides in the cytoplasm. It carries out the reaction Exonucleolytic cleavage in either 5'- to 3'- or 3'- to 5'-direction to yield nucleoside 5'-phosphates.. Bidirectionally degrades single-stranded DNA into large acid-insoluble oligonucleotides, which are then degraded further into small acid-soluble oligonucleotides. This chain is Exodeoxyribonuclease 7 small subunit, found in Legionella pneumophila (strain Paris).